Consider the following 485-residue polypeptide: Glutamate--tRNA ligase (485 aa).

The 'HIGH' region motif lies at Pro-11–Asn-21. The 'KMSKS' region motif lies at Lys-255–Arg-259. Lys-258 is an ATP binding site.

Belongs to the class-I aminoacyl-tRNA synthetase family. Glutamate--tRNA ligase type 1 subfamily. As to quaternary structure, monomer.

The protein resides in the cytoplasm. The enzyme catalyses tRNA(Glu) + L-glutamate + ATP = L-glutamyl-tRNA(Glu) + AMP + diphosphate. In terms of biological role, catalyzes the attachment of glutamate to tRNA(Glu) in a two-step reaction: glutamate is first activated by ATP to form Glu-AMP and then transferred to the acceptor end of tRNA(Glu). The polypeptide is Glutamate--tRNA ligase (Streptococcus mutans serotype c (strain ATCC 700610 / UA159)).